The following is a 272-amino-acid chain: Ribosomal RNA small subunit methyltransferase A (272 aa).

Residues asparagine 18, leucine 20, glycine 45, glutamate 66, aspartate 91, and asparagine 113 each coordinate S-adenosyl-L-methionine.

This sequence belongs to the class I-like SAM-binding methyltransferase superfamily. rRNA adenine N(6)-methyltransferase family. RsmA subfamily.

The protein localises to the cytoplasm. The catalysed reaction is adenosine(1518)/adenosine(1519) in 16S rRNA + 4 S-adenosyl-L-methionine = N(6)-dimethyladenosine(1518)/N(6)-dimethyladenosine(1519) in 16S rRNA + 4 S-adenosyl-L-homocysteine + 4 H(+). In terms of biological role, specifically dimethylates two adjacent adenosines (A1518 and A1519) in the loop of a conserved hairpin near the 3'-end of 16S rRNA in the 30S particle. May play a critical role in biogenesis of 30S subunits. This is Ribosomal RNA small subunit methyltransferase A from Serratia proteamaculans (strain 568).